Reading from the N-terminus, the 349-residue chain is Decapping nuclease RAI1 (349 aa).

Residue glutamate 157 coordinates a divalent metal cation. Glutamate 205 contributes to the substrate binding site. A divalent metal cation-binding residues include aspartate 207, glutamate 222, and leucine 223. Positions 224 and 248 each coordinate substrate.

Belongs to the DXO/Dom3Z family. As to quaternary structure, interacts with RAT1; the interaction is direct, stabilizes RAT1 protein structure and stimulates its exoribonuclease activity. The interaction also stimulates RAI1 pyrophosphohydrolase activity, probably by recruiting it to mRNA substrates. Requires a divalent metal cation as cofactor.

The protein resides in the nucleus. The enzyme catalyses a 5'-end NAD(+)-phospho-ribonucleoside in mRNA + H2O = a 5'-end phospho-ribonucleoside in mRNA + NAD(+) + H(+). The catalysed reaction is a 5'-end (N(7)-methyl 5'-triphosphoguanosine)-ribonucleoside-ribonucleotide in mRNA + H2O = a (N(7)-methyl 5'-triphosphoguanosine)-nucleoside + a 5'-end phospho-ribonucleoside in mRNA + H(+). It carries out the reaction a 5'-end triphospho-ribonucleoside in mRNA + H2O = a 5'-end phospho-ribonucleoside in mRNA + diphosphate + H(+). Its function is as follows. Decapping enzyme for NAD-capped RNAs: specifically hydrolyzes the nicotinamide adenine dinucleotide (NAD) cap from a subset of RNAs by removing the entire NAD moiety from the 5'-end of an NAD-capped RNA. The NAD-cap is present at the 5'-end of some RNAs and snoRNAs. In contrast to the canonical 5'-end N7 methylguanosine (m7G) cap, the NAD cap promotes mRNA decay. Also acts as a non-canonical decapping enzyme that removes the entire cap structure of m7G capped or incompletely capped RNAs. Has decapping activity toward incomplete 5'-end m7G cap mRNAs such as unmethylated 5'-end-capped RNA (cap0), while it has no activity toward 2'-O-ribose methylated m7G cap (cap1). Also possesses RNA 5'-pyrophosphohydrolase activity by hydrolyzing the 5'-end triphosphate to release pyrophosphates. Stimulates exoribonuclease activity of Rat1, allowing it to degrade RNAs with stable secondary structure more effectively. This is Decapping nuclease RAI1 (RAI1) from Yarrowia lipolytica (strain CLIB 122 / E 150) (Yeast).